Reading from the N-terminus, the 120-residue chain is Ubiquitin domain-containing protein TINCR (120 aa).

The 70-residue stretch at 14–83 folds into the Ubiquitin-like domain; it reads YHIKVHLADE…LQDGSVLLLV (70 aa).

As to expression, detected in stratum corneum (at protein level).

This Homo sapiens (Human) protein is Ubiquitin domain-containing protein TINCR.